The chain runs to 403 residues: Alkaline protease 1 (403 aa).

An N-terminal signal peptide occupies residues 1–21 (MQSIKRTLLLLGAILPAVLGA). The propeptide occupies 22 to 125 (PVQETRRAAE…QIYYLDGLTT (104 aa)). Positions 36-120 (KYIVTFKPGI…YVEEDQIYYL (85 aa)) constitute an Inhibitor I9 domain. The Peptidase S8 domain occupies 130–403 (PWGLGSISHK…PNLLAYNGNA (274 aa)). Active-site charge relay system residues include D162 and H193. The N-linked (GlcNAc...) asparagine glycan is linked to N253. S349 functions as the Charge relay system in the catalytic mechanism.

Belongs to the peptidase S8 family.

It is found in the secreted. It catalyses the reaction Hydrolysis of proteins with broad specificity, and of Bz-Arg-OEt &gt; Ac-Tyr-OEt. Does not hydrolyze peptide amides.. Secreted alkaline protease that allows assimilation of proteinaceous substrates. This Aspergillus flavus (strain ATCC 200026 / FGSC A1120 / IAM 13836 / NRRL 3357 / JCM 12722 / SRRC 167) protein is Alkaline protease 1 (alp1).